A 149-amino-acid chain; its full sequence is Nucleoside deoxyribosyltransferase (149 aa).

The Nucleophile role is filled by Glu-90.

This sequence belongs to the nucleoside deoxyribosyltransferase family.

The catalysed reaction is 2-deoxy-D-ribosyl-base(1) + base(2) = 2-deoxy-D-ribosyl-base(2) + base(1).. It functions in the pathway nucleotide metabolism; nucleotide salvage pathway. In terms of biological role, catalyzes the cleavage of the glycosidic bond of 2'-deoxyribonucleosides and the transfer of the deoxyribosyl moiety to an acceptor purine or pyrimidine base. The protein is Nucleoside deoxyribosyltransferase (ntd) of Lactobacillus johnsonii (strain CNCM I-12250 / La1 / NCC 533).